We begin with the raw amino-acid sequence, 73 residues long: Eukaryotic translation initiation factor 4 gamma 2 (73 aa).

The W2 domain maps to 1-70; that stretch reads QVHCYNSNFP…ETAEEEESEE (70 aa).

It belongs to the eukaryotic initiation factor 4G family. As to quaternary structure, interacts with the serine/threonine protein kinases MKNK1 and MKNK2. Binds EIF4A and EIF3. Post-translationally, phosphorylation; hyperphosphorylated during mitosis.

Its function is as follows. Appears to play a role in the switch from cap-dependent to IRES-mediated translation during mitosis, apoptosis and viral infection. Cleaved by some caspases and viral proteases. This chain is Eukaryotic translation initiation factor 4 gamma 2 (EIF4G2), found in Gallus gallus (Chicken).